Consider the following 444-residue polypeptide: Nuclear distribution protein nudF (444 aa).

The LisH domain occupies 9–41 (QAEALHKAMLAYLSVINAPQTAETLREELHFDE). Positions 60-88 (TGIARLQRRINDLEAEVRSLQAELEASPS) form a coiled coil. The segment at 83 to 107 (LEASPSAARAKNQDPTNWLPKPSST) is disordered. WD repeat units follow at residues 112 to 153 (SHRD…RTLK), 155 to 195 (HIRG…ANIR), 199 to 239 (GHDH…CVKV), 243 to 282 (ATES…PKAA), 285 to 345 (GHEN…IKTL), 347 to 386 (GHDN…RLVK), and 391 to 437 (AHEH…GCAD).

Belongs to the WD repeat LIS1/nudF family. As to quaternary structure, interacts with dynein. Self-associates. Interacts with bnfA, nudC and nudE.

The protein localises to the cytoplasm. It localises to the cytoskeleton. Its subcellular location is the spindle pole. Its function is as follows. Positively regulates the activity of the minus-end directed microtubule motor protein dynein. May enhance dynein-mediated microtubule sliding by targeting dynein to the microtubule plus end. Required for nuclear migration during vegetative growth as well as development. Required for retrograde early endosome (EE) transport from the hyphal tip. Required for localization of dynein to the mitotic spindle poles. Recruits additional proteins to the dynein complex at SPBs. The polypeptide is Nuclear distribution protein nudF (Emericella nidulans (strain FGSC A4 / ATCC 38163 / CBS 112.46 / NRRL 194 / M139) (Aspergillus nidulans)).